Reading from the N-terminus, the 454-residue chain is NADP-specific glutamate dehydrogenase (454 aa).

Ser-2 is subject to N-acetylserine. Residue Lys-114 is part of the active site.

Belongs to the Glu/Leu/Phe/Val dehydrogenases family. Homohexamer.

It catalyses the reaction L-glutamate + NADP(+) + H2O = 2-oxoglutarate + NH4(+) + NADPH + H(+). This Neurospora crassa (strain ATCC 24698 / 74-OR23-1A / CBS 708.71 / DSM 1257 / FGSC 987) protein is NADP-specific glutamate dehydrogenase (gdh).